Consider the following 255-residue polypeptide: Type III pantothenate kinase (255 aa).

6–13 (DIGNTTSE) serves as a coordination point for ATP. Residues Y100 and 107–110 (GIDR) contribute to the substrate site. Catalysis depends on D109, which acts as the Proton acceptor. A K(+)-binding site is contributed by D129. T132 serves as a coordination point for ATP. T184 contacts substrate.

This sequence belongs to the type III pantothenate kinase family. Homodimer. NH4(+) serves as cofactor. K(+) is required as a cofactor.

Its subcellular location is the cytoplasm. It carries out the reaction (R)-pantothenate + ATP = (R)-4'-phosphopantothenate + ADP + H(+). The protein operates within cofactor biosynthesis; coenzyme A biosynthesis; CoA from (R)-pantothenate: step 1/5. Its function is as follows. Catalyzes the phosphorylation of pantothenate (Pan), the first step in CoA biosynthesis. In Persephonella marina (strain DSM 14350 / EX-H1), this protein is Type III pantothenate kinase.